Consider the following 605-residue polypeptide: Kelch-like protein 26 (605 aa).

Positions 53–120 constitute a BTB domain; sequence LDVVLAIDNE…AYSSEVTLDL (68 aa). The 102-residue stretch at 155 to 256 folds into the BACK domain; that stretch reads CLNIGQMATT…RSSELVDSVQ (102 aa). Kelch repeat units follow at residues 300 to 351, 352 to 403, 404 to 450, 452 to 498, 499 to 549, and 551 to 598; these read SLIT…VLDN, FVYV…VLDG, QLYA…TCGD, LYIS…SANN, RIYA…LLDK, and IYIV…PIIL.

May play a role in endo(sarco)plasmic reticulum (ER/SR) mitochondrial signaling. May be part of the ubiquitin-proteasome system (UPS) and affect ubiquitination and degradation of target substrates. The protein is Kelch-like protein 26 (klhl26) of Danio rerio (Zebrafish).